A 311-amino-acid chain; its full sequence is tRNA dimethylallyltransferase (311 aa).

ATP is bound at residue 10-17; it reads GPTASGKT. 12–17 is a binding site for substrate; the sequence is TASGKT. Interaction with substrate tRNA regions lie at residues 35-38, 159-163, and 240-245; these read DSAL, QRINR, and RCVGYR.

The protein belongs to the IPP transferase family. As to quaternary structure, monomer. Requires Mg(2+) as cofactor.

The catalysed reaction is adenosine(37) in tRNA + dimethylallyl diphosphate = N(6)-dimethylallyladenosine(37) in tRNA + diphosphate. Catalyzes the transfer of a dimethylallyl group onto the adenine at position 37 in tRNAs that read codons beginning with uridine, leading to the formation of N6-(dimethylallyl)adenosine (i(6)A). The protein is tRNA dimethylallyltransferase of Haemophilus influenzae (strain PittEE).